The following is a 503-amino-acid chain: Probable cytosol aminopeptidase (503 aa).

2 residues coordinate Mn(2+): lysine 270 and aspartate 275. Lysine 282 is an active-site residue. Aspartate 293, aspartate 352, and glutamate 354 together coordinate Mn(2+). Arginine 356 is a catalytic residue.

The protein belongs to the peptidase M17 family. The cofactor is Mn(2+).

It is found in the cytoplasm. It carries out the reaction Release of an N-terminal amino acid, Xaa-|-Yaa-, in which Xaa is preferably Leu, but may be other amino acids including Pro although not Arg or Lys, and Yaa may be Pro. Amino acid amides and methyl esters are also readily hydrolyzed, but rates on arylamides are exceedingly low.. It catalyses the reaction Release of an N-terminal amino acid, preferentially leucine, but not glutamic or aspartic acids.. Its function is as follows. Presumably involved in the processing and regular turnover of intracellular proteins. Catalyzes the removal of unsubstituted N-terminal amino acids from various peptides. The chain is Probable cytosol aminopeptidase from Yersinia pseudotuberculosis serotype O:1b (strain IP 31758).